The following is a 249-amino-acid chain: EID1-like F-box protein 2 (249 aa).

The 53-residue stretch at 16-68 folds into the F-box domain; it reads HCTKGHLSEEVLFLMVQHLNWNPNVIATLSCVCKWFDDLAKRLLWKEFCRARA.

This chain is EID1-like F-box protein 2 (EDL2), found in Arabidopsis thaliana (Mouse-ear cress).